Consider the following 46-residue polypeptide: Viscotoxin-1-PS (46 aa).

3 disulfides stabilise this stretch: Cys3/Cys40, Cys4/Cys32, and Cys16/Cys26.

Belongs to the plant thionin (TC 1.C.44) family.

It is found in the secreted. Its function is as follows. Thionins are small plant proteins which are toxic to animal cells. They seem to exert their toxic effect at the level of the cell membrane. Their precise function is not known. The polypeptide is Viscotoxin-1-PS (THI2.4) (Viscum album (European mistletoe)).